The chain runs to 161 residues: Cyclic pyranopterin monophosphate synthase (161 aa).

Substrate contacts are provided by residues 75–77 (LCH) and 113–114 (ME). The active site involves D128.

Belongs to the MoaC family. Homohexamer; trimer of dimers.

It carries out the reaction (8S)-3',8-cyclo-7,8-dihydroguanosine 5'-triphosphate = cyclic pyranopterin phosphate + diphosphate. It participates in cofactor biosynthesis; molybdopterin biosynthesis. Catalyzes the conversion of (8S)-3',8-cyclo-7,8-dihydroguanosine 5'-triphosphate to cyclic pyranopterin monophosphate (cPMP). This is Cyclic pyranopterin monophosphate synthase from Escherichia coli O139:H28 (strain E24377A / ETEC).